Consider the following 580-residue polypeptide: uncharacterized protein (580 aa).

This is an uncharacterized protein from Methanocaldococcus jannaschii (strain ATCC 43067 / DSM 2661 / JAL-1 / JCM 10045 / NBRC 100440) (Methanococcus jannaschii).